A 905-amino-acid chain; its full sequence is Translation initiation factor IF-2 (905 aa).

The segment covering 50–62 (HYEAKGGEDKAAE) has biased composition (basic and acidic residues). The tract at residues 50–306 (HYEAKGGEDK…QKHEVGGVRL (257 aa)) is disordered. The span at 63-75 (KNAPAATPASASK) shows a compositional bias: low complexity. Positions 89-125 (GPKPSAAPKPGAAPKPGGAPKPGGAPKPGATPKPGGA) are enriched in pro residues. A compositionally biased stretch (low complexity) spans 161–171 (PFSTGSSSDRP). Over residues 233 to 276 (GSGGGGRGRGGRGGGPGHGGPGHGGFRGRGGRRGGTAGAFGRPG) the composition is skewed to gly residues. The span at 280 to 290 (RRGKKSKRQKR) shows a compositional bias: basic residues. The span at 291–302 (HEFEEQQKHEVG) shows a compositional bias: basic and acidic residues. Residues 401–575 (KRPPVVTVMG…LTADAALELT (175 aa)) form the tr-type G domain. The interval 410–417 (GHVDHGKT) is G1. 410–417 (GHVDHGKT) is a binding site for GTP. The G2 stretch occupies residues 435–439 (GITQG). A G3 region spans residues 460-463 (DTPG). Residues 460-464 (DTPGH) and 514-517 (NKID) contribute to the GTP site. Positions 514-517 (NKID) are G4. The interval 550-552 (SAK) is G5.

Belongs to the TRAFAC class translation factor GTPase superfamily. Classic translation factor GTPase family. IF-2 subfamily.

It is found in the cytoplasm. Its function is as follows. One of the essential components for the initiation of protein synthesis. Protects formylmethionyl-tRNA from spontaneous hydrolysis and promotes its binding to the 30S ribosomal subunits. Also involved in the hydrolysis of GTP during the formation of the 70S ribosomal complex. The protein is Translation initiation factor IF-2 of Corynebacterium aurimucosum (strain ATCC 700975 / DSM 44827 / CIP 107346 / CN-1) (Corynebacterium nigricans).